Reading from the N-terminus, the 121-residue chain is Large ribosomal subunit protein uL14 (121 aa).

Belongs to the universal ribosomal protein uL14 family. In terms of assembly, part of the 50S ribosomal subunit. Forms a cluster with proteins L3 and L19. In the 70S ribosome, L14 and L19 interact and together make contacts with the 16S rRNA in bridges B5 and B8.

Binds to 23S rRNA. Forms part of two intersubunit bridges in the 70S ribosome. The chain is Large ribosomal subunit protein uL14 from Synechococcus sp. (strain WH7803).